Consider the following 341-residue polypeptide: Acetylpolyamine amidohydrolase (341 aa).

Residues Y19, E106, and E117 each coordinate substrate. H159 (proton donor/acceptor) is an active-site residue. Zn(2+) is bound by residues D195, H197, and D284. Residue Y323 coordinates substrate.

Belongs to the histone deacetylase family. As to quaternary structure, homodimer. Zn(2+) is required as a cofactor.

The catalysed reaction is N-acetylputrescine + H2O = putrescine + acetate. It carries out the reaction N-acetylcadaverine + H2O = cadaverine + acetate. It catalyses the reaction N(1)-acetylspermine + H2O = spermine + acetate. The enzyme catalyses N(1)-acetylspermidine + H2O = spermidine + acetate. The catalysed reaction is N(8)-acetylspermidine + H2O = spermidine + acetate. The protein operates within amine and polyamine metabolism. Its activity is regulated as follows. Zinc ions inhibit enzyme activity in a dose-dependent manner. Inhibited by KCl at concentrations above 10 mM. Inhibited by o-oxyquinoline in vitro, suggesting that it is a metalloprotein. Inhibited by various substrate N(8)-acetylspermidine analogs bearing different metal-binding groups such as trifluoromethylketone, thiol, or hydroxamate, and by hydroxamate analogs of short-chain acetyldiamines. Involved in polyamine metabolism. Catalyzes the deacetylation of various acetylated polyamines such as N-acetylputrescine, N-acetylcadaverine, N(1)-acetylspermine, N(1)-acetylspermidine and N(8)-acetylspermidine. In vitro, is also able to deacetylate L-Lys(epsilon-acetyl)coumarin, but has very low activity towards the larger tetrapeptide N-acetyl-L-Arg-L-His-L-Lys(epsilon-acetyl)-L-Lys(epsilon-acetyl)coumarin. The protein is Acetylpolyamine amidohydrolase of Mycoplana ramosa (Mycoplana bullata).